A 271-amino-acid chain; its full sequence is MLLAIDVRNTHTVVGLISGSKEHAKVVQQWRIRTESEITADELALTIDGLIGDDSERLTGAAALSTVPSVLHEVRLMLDQYWPSVPHVLIEPGVRTGIPLLVDNPKEVGADRIVNCLAAFHRFQSPAIVIDFGSSICVDVVSAKGEFLGGAIAPGLQVSSDAAAARSAALRRVELARPRSVIGKNTVECMQAGAVFGFAGLVDGLVGRIREDVPGFGGDDVAIVATGHTAPLLLPELDTVSHYDQHLTLHGLRLVFERNRDAQRGRLKTAR.

Residue 6-13 (DVRNTHTV) participates in ATP binding. 109-112 (GADR) serves as a coordination point for substrate. Asp111 functions as the Proton acceptor in the catalytic mechanism. K(+) is bound at residue Asp131. Ser134 provides a ligand contact to ATP. Position 186 (Thr186) interacts with substrate.

The protein belongs to the type III pantothenate kinase family. As to quaternary structure, homodimer. It depends on NH4(+) as a cofactor. K(+) serves as cofactor.

The protein resides in the cytoplasm. It catalyses the reaction (R)-pantothenate + ATP = (R)-4'-phosphopantothenate + ADP + H(+). It functions in the pathway cofactor biosynthesis; coenzyme A biosynthesis; CoA from (R)-pantothenate: step 1/5. Its function is as follows. Catalyzes the phosphorylation of pantothenate (Pan), the first step in CoA biosynthesis. This chain is Type III pantothenate kinase, found in Mycobacterium avium (strain 104).